Here is a 294-residue protein sequence, read N- to C-terminus: 4-hydroxybenzoate octaprenyltransferase (294 aa).

8 helical membrane-spanning segments follow: residues 24–44 (IGIL…ADGF), 47–67 (LHLI…GCVI), 99–119 (LLAA…DPLV), 139–159 (FLAI…PMGF), 164–184 (GEVP…AVAY), 213–233 (VAAV…VGIA), 238–258 (PWFF…YTLI), and 274–294 (NWVG…FPAA).

It belongs to the UbiA prenyltransferase family. Mg(2+) is required as a cofactor.

Its subcellular location is the cell inner membrane. It carries out the reaction all-trans-octaprenyl diphosphate + 4-hydroxybenzoate = 4-hydroxy-3-(all-trans-octaprenyl)benzoate + diphosphate. Its pathway is cofactor biosynthesis; ubiquinone biosynthesis. Catalyzes the prenylation of para-hydroxybenzoate (PHB) with an all-trans polyprenyl group. Mediates the second step in the final reaction sequence of ubiquinone-8 (UQ-8) biosynthesis, which is the condensation of the polyisoprenoid side chain with PHB, generating the first membrane-bound Q intermediate 3-octaprenyl-4-hydroxybenzoate. The sequence is that of 4-hydroxybenzoate octaprenyltransferase from Aromatoleum aromaticum (strain DSM 19018 / LMG 30748 / EbN1) (Azoarcus sp. (strain EbN1)).